The chain runs to 201 residues: Rac-like GTP-binding protein ARAC2 (201 aa).

13 to 20 (GDGAVGKT) contacts GTP. The short motif at 35–43 (YVPTVFDNF) is the Effector region element. GTP is bound by residues 60–64 (DTAGQ) and 118–121 (TKLD). Residue C198 is modified to Cysteine methyl ester. C198 carries the S-geranylgeranyl cysteine lipid modification. The propeptide at 199–201 (FFL) is removed in mature form.

It belongs to the small GTPase superfamily. Rho family. As to expression, expressed exclusively in the root, hypocotyl and stem.

Its subcellular location is the cytoplasm. It localises to the membrane. Inactive GDP-bound Rho GTPases reside in the cytosol, are found in a complex with Rho GDP-dissociation inhibitors (Rho GDIs), and are released from the GDI protein in order to translocate to membranes upon activation. The chain is Rac-like GTP-binding protein ARAC2 (ARAC2) from Arabidopsis thaliana (Mouse-ear cress).